Consider the following 1342-residue polypeptide: DNA-directed RNA polymerase subunit beta (1342 aa).

It belongs to the RNA polymerase beta chain family. The RNAP catalytic core consists of 2 alpha, 1 beta, 1 beta' and 1 omega subunit. When a sigma factor is associated with the core the holoenzyme is formed, which can initiate transcription.

It carries out the reaction RNA(n) + a ribonucleoside 5'-triphosphate = RNA(n+1) + diphosphate. DNA-dependent RNA polymerase catalyzes the transcription of DNA into RNA using the four ribonucleoside triphosphates as substrates. The polypeptide is DNA-directed RNA polymerase subunit beta (Wigglesworthia glossinidia brevipalpis).